The primary structure comprises 382 residues: Anhydro-N-acetylmuramic acid kinase (382 aa).

9-16 provides a ligand contact to ATP; the sequence is GTSLDGID.

This sequence belongs to the anhydro-N-acetylmuramic acid kinase family.

The catalysed reaction is 1,6-anhydro-N-acetyl-beta-muramate + ATP + H2O = N-acetyl-D-muramate 6-phosphate + ADP + H(+). It participates in amino-sugar metabolism; 1,6-anhydro-N-acetylmuramate degradation. It functions in the pathway cell wall biogenesis; peptidoglycan recycling. Its function is as follows. Catalyzes the specific phosphorylation of 1,6-anhydro-N-acetylmuramic acid (anhMurNAc) with the simultaneous cleavage of the 1,6-anhydro ring, generating MurNAc-6-P. Is required for the utilization of anhMurNAc either imported from the medium or derived from its own cell wall murein, and thus plays a role in cell wall recycling. This chain is Anhydro-N-acetylmuramic acid kinase, found in Bacillus cereus (strain G9842).